The primary structure comprises 223 residues: Global nitrogen regulator (223 aa).

Residues 143–216 enclose the HTH crp-type domain; it reads RDMGSRLVSF…KKKITVHKPV (74 aa). The H-T-H motif DNA-binding region spans 176-195; sequence HQAIAEAIGSTRVTVTRLLG.

In terms of biological role, required for full expression of proteins subject to ammonium repression. Transcriptional activator of genes subject to nitrogen control. Functionally, has affinity for the xisA upstream region. Binds to a 66 bp region containing three repeats of the consensus recognition sequence 5'-ACATT-3'. The chain is Global nitrogen regulator (ntcA) from Nostoc sp. (strain PCC 7120 / SAG 25.82 / UTEX 2576).